The following is a 183-amino-acid chain: Putative 3-methyladenine DNA glycosylase (183 aa).

Belongs to the DNA glycosylase MPG family.

The sequence is that of Putative 3-methyladenine DNA glycosylase from Wolbachia pipientis subsp. Culex pipiens (strain wPip).